Here is a 256-residue protein sequence, read N- to C-terminus: Cysteine-rich repeat secretory protein 42 (256 aa).

Positions 1 to 26 (MSSVFGSVHILAMIAIQLLLTHSVSS) are cleaved as a signal peptide. 2 Gnk2-homologous domains span residues 33–136 (YLHH…SVAS) and 142–253 (YEND…LYPF).

The protein belongs to the cysteine-rich repeat secretory protein family.

Its subcellular location is the secreted. The polypeptide is Cysteine-rich repeat secretory protein 42 (CRRSP42) (Arabidopsis thaliana (Mouse-ear cress)).